The primary structure comprises 243 residues: I/6 autoantigen (243 aa).

An EF-hand domain is found at 110 to 145; that stretch reads LSVEEVDALFNALDSDNRGYVSVDEFMDALYGEEGR. The interval 166 to 243 is disordered; it reads PSWRMRPTPK…PPKQKAGCGC (78 aa). Over residues 176 to 196 the composition is skewed to basic residues; that stretch reads PTRKLRQKRKREQGQKRKQGQ. 6 repeat units span residues 181 to 188, 189 to 196, 197 to 204, 205 to 212, 213 to 220, and 221 to 228. Residues 181–228 are 6 X 8 AA tandem repeats; it reads RQKRKREQGQKRKQGQRQKQEQGQRQKREQGQRQKQEQGQKRKRERGG. Basic and acidic residues predominate over residues 198-220; the sequence is QKQEQGQRQKREQGQRQKQEQGQ.

The protein localises to the cytoplasm. The protein resides in the cytoskeleton. Its function is as follows. Microtubule-associated protein that may be involved in cross-linking microtubules. The chain is I/6 autoantigen from Trypanosoma brucei brucei.